Reading from the N-terminus, the 455-residue chain is Beta-glucosidase A (455 aa).

E165 (proton donor) is an active-site residue. The active-site Nucleophile is E363.

The protein belongs to the glycosyl hydrolase 1 family.

It carries out the reaction Hydrolysis of terminal, non-reducing beta-D-glucosyl residues with release of beta-D-glucose.. This is Beta-glucosidase A (bglA) from Caldicellulosiruptor saccharolyticus (Caldocellum saccharolyticum).